The sequence spans 304 residues: N-carbamoyl-D-amino acid hydrolase (304 aa).

A CN hydrolase domain is found at 5–276 (MILAVGQQGP…DEVITAAVDL (272 aa)). Catalysis depends on residues glutamate 47, lysine 127, and cysteine 172.

In terms of assembly, homotetramer.

It carries out the reaction an N-carbamoyl-D-amino acid + H2O + 2 H(+) = a D-alpha-amino acid + NH4(+) + CO2. Functionally, the enzyme catalyzes the hydrolysis of N-carbamoyl-D-amino acids to the corresponding which are useful intermediates in the preparation of beta-lactam antibiotics. Industrial production of beta-lactam antibiotics is now being developed using this enzyme. In Rhizobium radiobacter (Agrobacterium tumefaciens), this protein is N-carbamoyl-D-amino acid hydrolase.